The chain runs to 421 residues: Transcription factor rglT (421 aa).

The disordered stretch occupies residues 1–29 (MQYEAYQWGQSHPTSTSGSMLQDTPTAAS). Residues 8–29 (WGQSHPTSTSGSMLQDTPTAAS) show a composition bias toward polar residues. A DNA-binding region (zn(2)-C6 fungal-type) is located at residues 38–65 (CDECRKRKLKCSGEISGCSRCIKQSLSC). Positions 346–357 (EARQRRWHESPD) are enriched in basic and acidic residues. The disordered stretch occupies residues 346–371 (EARQRRWHESPDSHPLPPDQRLNIPS).

It localises to the nucleus. Transcription factor that is important for oxidative stress resistance and essential for gliotoxin (GT) self-protection through the regulation of a gene encoding a putative gliT homolog, even if E.nidulans does not produce gliotoxin itself. This is Transcription factor rglT from Emericella nidulans (strain FGSC A4 / ATCC 38163 / CBS 112.46 / NRRL 194 / M139) (Aspergillus nidulans).